A 327-amino-acid polypeptide reads, in one-letter code: Phenylalanine--tRNA ligase alpha subunit (327 aa).

Glutamate 252 lines the Mg(2+) pocket.

This sequence belongs to the class-II aminoacyl-tRNA synthetase family. Phe-tRNA synthetase alpha subunit type 1 subfamily. Tetramer of two alpha and two beta subunits. Requires Mg(2+) as cofactor.

It localises to the cytoplasm. It catalyses the reaction tRNA(Phe) + L-phenylalanine + ATP = L-phenylalanyl-tRNA(Phe) + AMP + diphosphate + H(+). This Yersinia pestis bv. Antiqua (strain Angola) protein is Phenylalanine--tRNA ligase alpha subunit.